We begin with the raw amino-acid sequence, 361 residues long: Chorismate synthase (361 aa).

NADP(+) is bound by residues R48 and R54. FMN-binding positions include 125–127, 238–239, G278, 293–297, and R319; these read RSS, NA, and KPTSS.

It belongs to the chorismate synthase family. In terms of assembly, homotetramer. Requires FMNH2 as cofactor.

It carries out the reaction 5-O-(1-carboxyvinyl)-3-phosphoshikimate = chorismate + phosphate. It functions in the pathway metabolic intermediate biosynthesis; chorismate biosynthesis; chorismate from D-erythrose 4-phosphate and phosphoenolpyruvate: step 7/7. Functionally, catalyzes the anti-1,4-elimination of the C-3 phosphate and the C-6 proR hydrogen from 5-enolpyruvylshikimate-3-phosphate (EPSP) to yield chorismate, which is the branch point compound that serves as the starting substrate for the three terminal pathways of aromatic amino acid biosynthesis. This reaction introduces a second double bond into the aromatic ring system. The chain is Chorismate synthase from Proteus mirabilis (strain HI4320).